The sequence spans 176 residues: Probable inosine/xanthosine triphosphatase (176 aa).

Asp36 lines the Mg(2+) pocket.

The protein belongs to the YjjX NTPase family. As to quaternary structure, homodimer. The cofactor is Mg(2+). It depends on Mn(2+) as a cofactor.

The enzyme catalyses XTP + H2O = XDP + phosphate + H(+). The catalysed reaction is ITP + H2O = IDP + phosphate + H(+). Its function is as follows. Phosphatase that hydrolyzes non-canonical purine nucleotides such as XTP and ITP to their respective diphosphate derivatives. Probably excludes non-canonical purines from DNA/RNA precursor pool, thus preventing their incorporation into DNA/RNA and avoiding chromosomal lesions. The polypeptide is Probable inosine/xanthosine triphosphatase (Saccharolobus solfataricus (strain ATCC 35092 / DSM 1617 / JCM 11322 / P2) (Sulfolobus solfataricus)).